The primary structure comprises 389 residues: Phospho-N-acetylmuramoyl-pentapeptide-transferase (389 aa).

The next 11 membrane-spanning stretches (helical) occupy residues 21–41 (YITMRAVLACATALLIGLVAG), 71–91 (TPTMGGALILIAVAISTLLWA), 97–117 (FVWVVLLVTFGFGWIGWMDDY), 134–154 (FFWQATIGLVAAVYLAFAVSA), 167–187 (WVSSGFAMPLPTRADLIVPFF), 190–210 (VSYPLGVLGFVALTWAVIVGT), 222–242 (GLAIMPTVMVGSALGIFAYVV), 259–279 (AAELMVLCAAIAGAGLAFLWF), 286–306 (VFMGDVGALALGGALGTIAVI), 311–331 (IVLFIMGGVFVVETLSVMMQV), and 366–386 (QVVVRFWIISMMLVLIGLSTL).

It belongs to the glycosyltransferase 4 family. MraY subfamily. The cofactor is Mg(2+).

It is found in the cell inner membrane. The catalysed reaction is UDP-N-acetyl-alpha-D-muramoyl-L-alanyl-gamma-D-glutamyl-meso-2,6-diaminopimeloyl-D-alanyl-D-alanine + di-trans,octa-cis-undecaprenyl phosphate = di-trans,octa-cis-undecaprenyl diphospho-N-acetyl-alpha-D-muramoyl-L-alanyl-D-glutamyl-meso-2,6-diaminopimeloyl-D-alanyl-D-alanine + UMP. It functions in the pathway cell wall biogenesis; peptidoglycan biosynthesis. In terms of biological role, catalyzes the initial step of the lipid cycle reactions in the biosynthesis of the cell wall peptidoglycan: transfers peptidoglycan precursor phospho-MurNAc-pentapeptide from UDP-MurNAc-pentapeptide onto the lipid carrier undecaprenyl phosphate, yielding undecaprenyl-pyrophosphoryl-MurNAc-pentapeptide, known as lipid I. In Bordetella petrii (strain ATCC BAA-461 / DSM 12804 / CCUG 43448), this protein is Phospho-N-acetylmuramoyl-pentapeptide-transferase.